The sequence spans 899 residues: Inner tegument protein (899 aa).

An interaction with large tegument protein region spans residues 463 to 899 (WNYTWLDATS…SAILDAELSK (437 aa)).

This sequence belongs to the herpesviridae inner tegument protein family. In terms of assembly, interacts (via C-terminus) with the large tegument protein/LTP (via N-terminus).

The protein resides in the virion tegument. It localises to the host cytoplasm. Its subcellular location is the host nucleus. The protein localises to the host Golgi apparatus. It is found in the host trans-Golgi network. Plays an essential role in cytoplasmic secondary envelopment during viral egress. Interacts with the capsid via the large tegument protein/LTP and participates in its transport to the host trans-Golgi network (TGN) where secondary envelopment occurs. Modulates tegumentation and capsid accumulation at the viral assembly complex. The protein is Inner tegument protein (63) of Saimiri sciureus (Common squirrel monkey).